We begin with the raw amino-acid sequence, 390 residues long: 4-hydroxy-3-methylbut-2-en-1-yl diphosphate synthase (flavodoxin) (390 aa).

Residues Cys-281, Cys-284, Cys-316, and Glu-323 each contribute to the [4Fe-4S] cluster site.

The protein belongs to the IspG family. [4Fe-4S] cluster serves as cofactor.

It carries out the reaction (2E)-4-hydroxy-3-methylbut-2-enyl diphosphate + oxidized [flavodoxin] + H2O + 2 H(+) = 2-C-methyl-D-erythritol 2,4-cyclic diphosphate + reduced [flavodoxin]. It participates in isoprenoid biosynthesis; isopentenyl diphosphate biosynthesis via DXP pathway; isopentenyl diphosphate from 1-deoxy-D-xylulose 5-phosphate: step 5/6. Converts 2C-methyl-D-erythritol 2,4-cyclodiphosphate (ME-2,4cPP) into 1-hydroxy-2-methyl-2-(E)-butenyl 4-diphosphate. This Salinispora tropica (strain ATCC BAA-916 / DSM 44818 / JCM 13857 / NBRC 105044 / CNB-440) protein is 4-hydroxy-3-methylbut-2-en-1-yl diphosphate synthase (flavodoxin).